We begin with the raw amino-acid sequence, 154 residues long: MSTSLAVVRLDPGLPLPSRAHDGDAGVDLYSVEDVKLAPGQRALVRTGLAVAIPFGMVGLIHPRSGLAVRVGLSIVNSPGTVDAGYRGEIKVALINLDPVEPLVVHRGDRIAQLLVQRVELVELVEVSSFDEAGLAETSRGDGGHGSSGGHASL.

Substrate is bound by residues 64 to 66 (RSG), N77, 81 to 83 (TVD), and K91.

Belongs to the dUTPase family. As to quaternary structure, homotrimer. Mg(2+) serves as cofactor.

The catalysed reaction is dUTP + H2O = dUMP + diphosphate + H(+). It participates in pyrimidine metabolism; dUMP biosynthesis; dUMP from dCTP (dUTP route): step 2/2. Its function is as follows. This enzyme is involved in nucleotide metabolism: it produces dUMP, the immediate precursor of thymidine nucleotides and it decreases the intracellular concentration of dUTP so that uracil cannot be incorporated into DNA. The protein is Deoxyuridine 5'-triphosphate nucleotidohydrolase of Mycobacterium leprae (strain Br4923).